A 396-amino-acid polypeptide reads, in one-letter code: L-lactate dehydrogenase (396 aa).

The FMN hydroxy acid dehydrogenase domain occupies 1–380; it reads MIISAASDYR…SGDSLVQELG (380 aa). Substrate is bound at residue Tyr-24. Residues Ser-106 and Gln-127 each coordinate FMN. Tyr-129 contributes to the substrate binding site. Position 155 (Thr-155) interacts with FMN. Arg-164 contributes to the substrate binding site. An FMN-binding site is contributed by Lys-251. The Proton acceptor role is filled by His-275. Arg-278 lines the substrate pocket. FMN is bound at residue 306 to 330; it reads DSGIRNGLDVVRMIALGADTVLLGR.

This sequence belongs to the FMN-dependent alpha-hydroxy acid dehydrogenase family. The cofactor is FMN.

The protein resides in the cell inner membrane. The enzyme catalyses (S)-lactate + A = pyruvate + AH2. Functionally, catalyzes the conversion of L-lactate to pyruvate. Is coupled to the respiratory chain. This Salmonella paratyphi B (strain ATCC BAA-1250 / SPB7) protein is L-lactate dehydrogenase.